The primary structure comprises 296 residues: uncharacterized protein (296 aa).

Residues 1–20 (MRKFIFVLLTLLLVSPFSFA) form the signal peptide.

This is an uncharacterized protein from Escherichia coli (strain K12).